The chain runs to 130 residues: Small ribosomal subunit protein uS11c (130 aa).

Belongs to the universal ribosomal protein uS11 family. Part of the 30S ribosomal subunit.

Its subcellular location is the plastid. It is found in the chloroplast. This is Small ribosomal subunit protein uS11c from Spirogyra maxima (Green alga).